A 160-amino-acid polypeptide reads, in one-letter code: Single-stranded DNA-binding protein 2 (160 aa).

The SSB domain maps to 2 to 104 (MNRVVLVGRL…VVAESVQFLE (103 aa)). Residues 107–160 (NNNVEGATSNNYQNKANYSNNNQTSSYRADTSQKSDSFASEGKPIDINEDDLPF) form a disordered region. The segment covering 115-129 (SNNYQNKANYSNNNQ) has biased composition (low complexity). Over residues 130-144 (TSSYRADTSQKSDSF) the composition is skewed to polar residues. The Important for interaction with partner proteins motif lies at 155 to 160 (EDDLPF).

Homotetramer.

Its function is as follows. Plays an important role in DNA replication, recombination and repair. Binds to ssDNA and to an array of partner proteins to recruit them to their sites of action during DNA metabolism. This chain is Single-stranded DNA-binding protein 2 (ssb2), found in Listeria monocytogenes serovar 1/2a (strain ATCC BAA-679 / EGD-e).